The following is a 422-amino-acid chain: C-type lectin domain family 4 member M (422 aa).

Residues 1 to 49 (MSDSKEPRVQPLGLLEEDPTTSGIRLFPRDFQFQQTHGHKSSTGCLGHG) are Cytoplasmic-facing. The Endocytosis signal motif lies at 14–15 (LL). A helical; Signal-anchor for type II membrane protein transmembrane segment spans residues 50 to 70 (PLVLQLLSFALLAGVLVAILV). At 71–422 (QVYKVPSSLS…KKPIACFRDE (352 aa)) the chain is on the extracellular side. Asparagine 92 carries N-linked (GlcNAc...) asparagine glycosylation. 8 consecutive repeat copies span residues 108 to 130 (KLQE…PEKS), 131 to 151 (KQQE…ELPE), 154 to 176 (QLQE…PEES), 177 to 199 (RLQE…PEKS), 200 to 222 (RLQE…PEKS), 223 to 245 (RLQE…PEKS), 246 to 268 (KLQE…PDQS), and 269 to 291 (KQQQ…CCRC). Positions 108 to 292 (KLQEIYQELT…AFERLCCRCP (185 aa)) are 8 X approximate tandem repeats. Disulfide bonds link cysteine 288–cysteine 418, cysteine 291–cysteine 302, cysteine 319–cysteine 412, and cysteine 391–cysteine 404. Residues 297 to 413 (FFQGNCYFMS…CNVDNYWICK (117 aa)) enclose the C-type lectin domain. Residues glutamate 382, asparagine 384, serine 386, glutamate 389, asparagine 400, and aspartate 401 each coordinate Ca(2+). Asparagine 384 carries an N-linked (GlcNAc...) asparagine glycan.

In terms of assembly, homotetramer.

It is found in the membrane. Probable pathogen-recognition receptor involved in peripheral immune surveillance in liver. May mediate the endocytosis of pathogens which are subsequently degraded in lysosomal compartments. Probably recognizes in a calcium-dependent manner high mannose N-linked oligosaccharides in a variety of pathogen antigens. Is a receptor for ICAM3, probably by binding to mannose-like carbohydrates. The chain is C-type lectin domain family 4 member M (CLEC4M) from Symphalangus syndactylus (Siamang).